A 213-amino-acid chain; its full sequence is ATP phosphoribosyltransferase (213 aa).

Belongs to the ATP phosphoribosyltransferase family. Short subfamily. In terms of assembly, heteromultimer composed of HisG and HisZ subunits.

It is found in the cytoplasm. It catalyses the reaction 1-(5-phospho-beta-D-ribosyl)-ATP + diphosphate = 5-phospho-alpha-D-ribose 1-diphosphate + ATP. Its pathway is amino-acid biosynthesis; L-histidine biosynthesis; L-histidine from 5-phospho-alpha-D-ribose 1-diphosphate: step 1/9. Catalyzes the condensation of ATP and 5-phosphoribose 1-diphosphate to form N'-(5'-phosphoribosyl)-ATP (PR-ATP). Has a crucial role in the pathway because the rate of histidine biosynthesis seems to be controlled primarily by regulation of HisG enzymatic activity. The sequence is that of ATP phosphoribosyltransferase from Listeria monocytogenes serotype 4b (strain F2365).